An 87-amino-acid polypeptide reads, in one-letter code: UPF0250 protein ESA_02696 (87 aa).

Belongs to the UPF0250 family.

The chain is UPF0250 protein ESA_02696 from Cronobacter sakazakii (strain ATCC BAA-894) (Enterobacter sakazakii).